The following is a 189-amino-acid chain: dCTP deaminase (189 aa).

DCTP is bound by residues 112–117 (KSTYAR), 136–138 (TLE), Q157, Y171, and Q181. The active-site Proton donor/acceptor is the E138.

The protein belongs to the dCTP deaminase family. Homotrimer.

It catalyses the reaction dCTP + H2O + H(+) = dUTP + NH4(+). It functions in the pathway pyrimidine metabolism; dUMP biosynthesis; dUMP from dCTP (dUTP route): step 1/2. In terms of biological role, catalyzes the deamination of dCTP to dUTP. This is dCTP deaminase from Alcanivorax borkumensis (strain ATCC 700651 / DSM 11573 / NCIMB 13689 / SK2).